The primary structure comprises 664 residues: Acetylcholinesterase (664 aa).

An N-terminal signal peptide occupies residues methionine 1 to glycine 29. Cysteine 95 and cysteine 122 are disulfide-bonded. Residue asparagine 117 is glycosylated (N-linked (GlcNAc...) asparagine). The active-site Acyl-ester intermediate is serine 261. An intrachain disulfide couples cysteine 315 to cysteine 330. Asparagine 316 carries an N-linked (GlcNAc...) asparagine glycan. Active-site charge relay system residues include glutamate 390 and histidine 504. Cysteine 466 and cysteine 588 form a disulfide bridge. A glycan (N-linked (GlcNAc...) asparagine) is linked at asparagine 517. Asparagine 647 is lipidated: GPI-anchor amidated asparagine. Positions lysine 648 to histidine 664 are cleaved as a propeptide — removed in mature form.

This sequence belongs to the type-B carboxylesterase/lipase family. Homodimer; disulfide-linked.

The protein resides in the synapse. It is found in the cell membrane. It catalyses the reaction acetylcholine + H2O = choline + acetate + H(+). In terms of biological role, rapidly hydrolyzes choline released into the synapse. It can hydrolyze butyrylthiocholine. The sequence is that of Acetylcholinesterase from Anopheles stephensi (Indo-Pakistan malaria mosquito).